Reading from the N-terminus, the 299-residue chain is Nitrogenase iron protein (299 aa).

11 to 18 (GKGGIGKS) lines the ATP pocket. C99 is a [4Fe-4S] cluster binding site. R102 is modified (ADP-ribosylarginine; by dinitrogenase reductase ADP-ribosyltransferase). C133 serves as a coordination point for [4Fe-4S] cluster.

Belongs to the NifH/BchL/ChlL family. Homodimer. [4Fe-4S] cluster serves as cofactor. The reversible ADP-ribosylation of Arg-102 inactivates the nitrogenase reductase and regulates nitrogenase activity.

It carries out the reaction N2 + 8 reduced [2Fe-2S]-[ferredoxin] + 16 ATP + 16 H2O = H2 + 8 oxidized [2Fe-2S]-[ferredoxin] + 2 NH4(+) + 16 ADP + 16 phosphate + 6 H(+). In terms of biological role, the key enzymatic reactions in nitrogen fixation are catalyzed by the nitrogenase complex, which has 2 components: the iron protein and the molybdenum-iron protein. This Rhodopseudomonas palustris (strain BisB5) protein is Nitrogenase iron protein.